The primary structure comprises 615 residues: TORTIFOLIA1-like protein 3 (615 aa).

HEAT repeat units lie at residues 44–81 (GNLQ…SLPL), 86–123 (PFLS…RTTK), 125–163 (PFYS…SASD), 168–205 (RLGQ…AGGL), and 213–250 (GGLK…MERN). Residues 288–446 (VPDLSEEVSP…HHVLSENPNS (159 aa)) form a disordered region. Residues 318–347 (RVGSTPAKSRTHLVNRSTPPGSSLATTARK) are compositionally biased toward polar residues. The span at 391–406 (DEQHCDHDENAKETSH) shows a compositional bias: basic and acidic residues. Residues 407 to 426 (SSHNTVQKLGGVSSSLNGNI) are compositionally biased toward polar residues. Residue S456 is modified to Phosphoserine.

The sequence is that of TORTIFOLIA1-like protein 3 from Arabidopsis thaliana (Mouse-ear cress).